Reading from the N-terminus, the 178-residue chain is Interleukin-10 (178 aa).

Positions 1-18 (MPGSALLCCLLLLTGMRI) are cleaved as a signal peptide. N-linked (GlcNAc...) asparagine glycosylation occurs at N29. Cystine bridges form between C30–C126 and C80–C132. N134 is a glycosylation site (N-linked (GlcNAc...) asparagine).

Belongs to the IL-10 family. In terms of assembly, homodimer. Interacts with IL10RA and IL10RB.

It localises to the secreted. Functionally, major immune regulatory cytokine that acts on many cells of the immune system where it has profound anti-inflammatory functions, limiting excessive tissue disruption caused by inflammation. Mechanistically, IL10 binds to its heterotetrameric receptor comprising IL10RA and IL10RB leading to JAK1 and STAT2-mediated phosphorylation of STAT3. In turn, STAT3 translocates to the nucleus where it drives expression of anti-inflammatory mediators. Targets antigen-presenting cells (APCs) such as macrophages and monocytes and inhibits their release of pro-inflammatory cytokines including granulocyte-macrophage colony-stimulating factor /GM-CSF, granulocyte colony-stimulating factor/G-CSF, IL-1 alpha, IL-1 beta, IL-6, IL-8 and TNF-alpha. Also interferes with antigen presentation by reducing the expression of MHC-class II and co-stimulatory molecules, thereby inhibiting their ability to induce T cell activation. In addition, controls the inflammatory response of macrophages by reprogramming essential metabolic pathways including mTOR signaling. The sequence is that of Interleukin-10 (Il10) from Mus musculus (Mouse).